A 393-amino-acid polypeptide reads, in one-letter code: S-adenosylmethionine synthase (393 aa).

Residue Glu9 coordinates Mg(2+). His15 provides a ligand contact to ATP. Residue Glu43 coordinates K(+). Positions 56 and 99 each coordinate L-methionine. ATP-binding positions include 167–169 (DGK), 235–238 (SGRF), Asp246, 252–253 (RK), Ala269, Lys273, and Lys277. Asp246 contacts L-methionine. An L-methionine-binding site is contributed by Lys277.

This sequence belongs to the AdoMet synthase family. Homotetramer. It depends on Mn(2+) as a cofactor. The cofactor is Mg(2+). Requires Co(2+) as cofactor. K(+) is required as a cofactor.

The protein localises to the cytoplasm. The enzyme catalyses L-methionine + ATP + H2O = S-adenosyl-L-methionine + phosphate + diphosphate. Its pathway is amino-acid biosynthesis; S-adenosyl-L-methionine biosynthesis; S-adenosyl-L-methionine from L-methionine: step 1/1. Catalyzes the formation of S-adenosylmethionine from methionine and ATP. The reaction comprises two steps that are both catalyzed by the same enzyme: formation of S-adenosylmethionine (AdoMet) and triphosphate, and subsequent hydrolysis of the triphosphate. The sequence is that of S-adenosylmethionine synthase (SAMS) from Gossypium hirsutum (Upland cotton).